A 425-amino-acid chain; its full sequence is Histidine--tRNA ligase (425 aa).

Belongs to the class-II aminoacyl-tRNA synthetase family. As to quaternary structure, homodimer.

The protein resides in the cytoplasm. The catalysed reaction is tRNA(His) + L-histidine + ATP = L-histidyl-tRNA(His) + AMP + diphosphate + H(+). The polypeptide is Histidine--tRNA ligase (Aeromonas hydrophila subsp. hydrophila (strain ATCC 7966 / DSM 30187 / BCRC 13018 / CCUG 14551 / JCM 1027 / KCTC 2358 / NCIMB 9240 / NCTC 8049)).